A 312-amino-acid polypeptide reads, in one-letter code: Carbonic anhydrase 4 (312 aa).

Positions 1 to 18 (MRLLLALLVLAAAPPQAR) are cleaved as a signal peptide. The Alpha-carbonic anhydrase domain occupies 21–285 (SHWCYQIQVK…LGQRQVFRSG (265 aa)). 2 cysteine pairs are disulfide-bonded: C24–C36 and C46–C229. N-linked (GlcNAc...) asparagine glycosylation occurs at N33. Residue H88 is the Proton donor/acceptor of the active site. Zn(2+) is bound by residues H115, H117, and H140. N152 and N195 each carry an N-linked (GlcNAc...) asparagine glycan. Position 225 to 226 (225 to 226 (TT)) interacts with substrate. N265 carries N-linked (GlcNAc...) asparagine glycosylation. S284 carries GPI-anchor amidated serine lipidation. Positions 285–312 (GAPGLLLAQPLPTLLAPVLACLTVGFLR) are cleaved as a propeptide — removed in mature form.

Belongs to the alpha-carbonic anhydrase family. Interacts with SLC4A4. Requires Zn(2+) as cofactor.

It is found in the cell membrane. The catalysed reaction is hydrogencarbonate + H(+) = CO2 + H2O. Its activity is regulated as follows. Inhibited by acetazolamide. Functionally, catalyzes the reversible hydration of carbon dioxide into bicarbonate and protons and thus is essential to maintaining intracellular and extracellular pH. May stimulate the sodium/bicarbonate transporter activity of SLC4A4 that acts in pH homeostasis. It is essential for acid overload removal from the retina and retina epithelium, and acid release in the choriocapillaris in the choroid. In Bos taurus (Bovine), this protein is Carbonic anhydrase 4 (CA4).